We begin with the raw amino-acid sequence, 88 residues long: Small ribosomal subunit protein uS17 (88 aa).

The protein belongs to the universal ribosomal protein uS17 family. Part of the 30S ribosomal subunit.

One of the primary rRNA binding proteins, it binds specifically to the 5'-end of 16S ribosomal RNA. This chain is Small ribosomal subunit protein uS17, found in Prochlorococcus marinus (strain MIT 9215).